Reading from the N-terminus, the 271-residue chain is MQPMLNIALRAARSAGELIFRSIERLDVISVNEKDAKDYVTEVDRAAEQTIVAALRKAYPTHAIMGEEGGFIEGSGEGADYLWVIDPLDGTTNFIHGVPHFAVSIACKYKGRLEHAVVLDPVRQEEFTASRGRGAALNGRRLRVSGRKSLEGALLGTGFPFRDNQIDNLDNYLNMFRSLVGQTAGIRRAGAASLDLAYVAAGRYDAFWEFGLSEWDMAAGALLVQEAGGLVSDFTGSHEFLEKGHIVAGNTKCFKALLTTIQPHLPPSLKR.

3 residues coordinate Mg(2+): Glu67, Asp86, and Leu88. Substrate is bound at residue Glu67. Substrate is bound by residues 88–91, Arg187, and Asp216; that span reads LDGT.

The protein belongs to the inositol monophosphatase superfamily. As to quaternary structure, homodimer. The rRNA transcription and antitermination complex (rrnTAC) consists of RNA polymerase (RNAP), NusA, NusB, NusE (rpsJ), NusG, SubB, ribosomal protein S4, DNA and precursor rRNA; S4 is more flexible than other subunits. Interacts with the ribosome and with RNA polymerase. Mg(2+) serves as cofactor.

It is found in the cytoplasm. It catalyses the reaction a myo-inositol phosphate + H2O = myo-inositol + phosphate. Part of the processive rRNA transcription and antitermination complex (rrnTAC). The complex forms an RNA-chaperone ring around the RNA exit tunnel of RNA polymerase (RNAP). It supports rapid transcription and antitermination of rRNA operons, cotranscriptional rRNA folding, and annealing of distal rRNA regions to allow correct ribosome biogenesis. This subunit may play a central role in organizing the structure. Functionally, a ribosome-associated protein, deletion of which alters the expression of 494 genes, suggesting a role in global gene regulation. Involved in control of pathogenesis-related genes. Required for the activation of virulence factors associated with acute infections (type 3 secretion system, T3SS) while suppressing virulence factors associated with chronic infections (biofilm formation and type 6 secretion system, T6SS). It probably acts at a post-transcriptional level. This is Nus factor SuhB from Pseudomonas aeruginosa (strain ATCC 15692 / DSM 22644 / CIP 104116 / JCM 14847 / LMG 12228 / 1C / PRS 101 / PAO1).